The primary structure comprises 408 residues: Zinc finger and SCAN domain-containing protein 1 (408 aa).

The tract at residues 1-34 is disordered; sequence MLPRPKAPASPRRPQTPTPSEQDADPGPASPRDT. The SCAN box domain maps to 38 to 120; that stretch reads RLRFRQFQYH…SLVEDLTQMC (83 aa). Disordered stretches follow at residues 136-155, 177-203, and 215-273; these read WSFGEEEDGKSPRSQKEPSQ, LETTQLQQSLHTRAEAEAPRAPGLLGS, and DEPE…GGTQ. Positions 177-187 are enriched in polar residues; it reads LETTQLQQSLH. 2 C2H2-type zinc fingers span residues 292–314 and 320–342; these read FQCADCGMVFTWVTHFIEHQKTH and FPCPECGKVFLHNSVLTEHGKIH. The interval 344–379 is disordered; sequence LEPPRKKAPRSKGPRESVPPRDGAQGPVAPRSPKRP. The C2H2-type 3 zinc finger occupies 380–402; that stretch reads FQCSVCGKAFPWMVHLIDHQKLH.

The protein resides in the nucleus. Functionally, may be involved in transcriptional regulation. The polypeptide is Zinc finger and SCAN domain-containing protein 1 (ZSCAN1) (Homo sapiens (Human)).